The chain runs to 157 residues: Regenerating islet-derived protein 4 (157 aa).

The signal sequence occupies residues 1-22; it reads MASKCVRLLLLLSWVAGPEVLS. The cysteines at positions 29 and 40 are disulfide-linked. The region spanning 36-154 is the C-type lectin domain; that stretch reads YRSHCYGYFR…CTKRQHFLCK (119 aa). N-linked (GlcNAc...) asparagine glycans are attached at residues Asn49, Asn62, and Asn101. Cystine bridges form between Cys57/Cys153 and Cys128/Cys145. A carbohydrate contacts are provided by residues 97–101 and 134–136; these read DPQKN and KDK.

Its subcellular location is the secreted. In terms of biological role, calcium-independent lectin displaying mannose-binding specificity and able to maintain carbohydrate recognition activity in an acidic environment. May be involved in inflammatory and metaplastic responses of the gastrointestinal epithelium. This Rattus norvegicus (Rat) protein is Regenerating islet-derived protein 4 (Reg4).